The primary structure comprises 676 residues: Multisubstrate pseudouridine synthase 7 (676 aa).

Disordered regions lie at residues 1 to 27 (MSDS…AKKL) and 87 to 110 (KMPK…AARR). The residue at position 2 (serine 2) is an N-acetylserine. Residues 94-110 (RSKEEVNAEKESEAARR) show a composition bias toward basic and acidic residues. The Nucleophile role is filled by aspartate 256. The 245-residue stretch at 338-582 (GFINYFGMQR…AGSYRTVIQK (245 aa)) folds into the TRUD domain.

The protein belongs to the pseudouridine synthase TruD family.

It is found in the nucleus. It localises to the cytoplasm. The catalysed reaction is uridine in 5S rRNA = pseudouridine in 5S rRNA. It carries out the reaction uridine in snRNA = pseudouridine in snRNA. The enzyme catalyses uridine(13) in tRNA = pseudouridine(13) in tRNA. It catalyses the reaction a uridine in mRNA = a pseudouridine in mRNA. In terms of biological role, catalyzes pseudouridylation at position 35 in U2 snRNA stem-loop II region which induces particular conformation of the mRNA-U2 snRNA duplex and places the nucleophile in an accessible position for the first step of splicing. Also catalyzes pseudouridylation at position 56 in U2 snRNA. Also catalyzes pseudouridylation at position 50 in 5S rRNA, position 13 in cytoplasmic tRNAs, and position 35 in pre-tRNA(Tyr). Pseudouridine residues in tRNAs may stabilize the local RNA conformation, favor interactions with protein partners and play an important role in the stabilization of the codon-anticodon interaction with mRNA. Also catalyzes pseudouridylation of mRNAs in response to heat shock: mediates pseudouridylation of mRNAs with the consensus sequence 5'-UGUAR-3'. This chain is Multisubstrate pseudouridine synthase 7, found in Saccharomyces cerevisiae (strain ATCC 204508 / S288c) (Baker's yeast).